The sequence spans 664 residues: UvrABC system protein B (664 aa).

Positions 23 to 412 (EGLNRGMRFQ…VVEQIIRPTG (390 aa)) constitute a Helicase ATP-binding domain. 36-43 (GVTGSGKT) contributes to the ATP binding site. The Beta-hairpin signature appears at 89 to 112 (YYDYYQPEAYIPTKDLYIEKNADI). Positions 429–588 (DLVNEIVKVK…ITPRSVIKPL (160 aa)) constitute a Helicase C-terminal domain. The UVR domain occupies 622–657 (EEYMAVLEEEMYRAASELRYEDAAALRDELFRIREE).

The protein belongs to the UvrB family. As to quaternary structure, forms a heterotetramer with UvrA during the search for lesions. Interacts with UvrC in an incision complex.

It is found in the cytoplasm. Functionally, the UvrABC repair system catalyzes the recognition and processing of DNA lesions. A damage recognition complex composed of 2 UvrA and 2 UvrB subunits scans DNA for abnormalities. Upon binding of the UvrA(2)B(2) complex to a putative damaged site, the DNA wraps around one UvrB monomer. DNA wrap is dependent on ATP binding by UvrB and probably causes local melting of the DNA helix, facilitating insertion of UvrB beta-hairpin between the DNA strands. Then UvrB probes one DNA strand for the presence of a lesion. If a lesion is found the UvrA subunits dissociate and the UvrB-DNA preincision complex is formed. This complex is subsequently bound by UvrC and the second UvrB is released. If no lesion is found, the DNA wraps around the other UvrB subunit that will check the other stand for damage. In Thermotoga maritima (strain ATCC 43589 / DSM 3109 / JCM 10099 / NBRC 100826 / MSB8), this protein is UvrABC system protein B.